The chain runs to 694 residues: Long-chain-fatty-acid--CoA ligase 4 (694 aa).

The disordered stretch occupies residues 1–21 (MTEQYSVAVGEAANEHETAPR). Position 269 to 280 (269 to 280 (YTSGSTGTPKGV)) interacts with ATP. The FACS motif lies at 527 to 576 (DGWFRTGDIAEWTPKGQVKIIDRKKNLVKTLNGEYIALEKLESIYRSNPY).

This sequence belongs to the ATP-dependent AMP-binding enzyme family. In terms of assembly, interacts with FAT1. Mg(2+) is required as a cofactor.

It localises to the lipid droplet. It catalyses the reaction a long-chain fatty acid + ATP + CoA = a long-chain fatty acyl-CoA + AMP + diphosphate. The enzyme catalyses (9Z)-hexadecenoate + ATP + CoA = (9Z)-hexadecenoyl-CoA + AMP + diphosphate. The catalysed reaction is (9Z)-octadecenoate + ATP + CoA = (9Z)-octadecenoyl-CoA + AMP + diphosphate. It carries out the reaction hexadecanoate + ATP + CoA = hexadecanoyl-CoA + AMP + diphosphate. In terms of biological role, activates long-chain fatty acids (LCFA) by esterification of the fatty acids into metabolically active CoA-thioesters for subsequent degradation or incorporation into phospholipids. Also facilitates the transport of LCFAs into the cell, either by active transport or by decreasing the intracellular LCFA concentration. Contributes, with FAA1, to the activation of imported myristate. Also involved in long-chain base (LCB) uptake. In contrast ot LCFA uptake, LCB uptake does not require ATP, suggesting that the enzyme is directly involved in LCB uptake. Involved in the sphingolipid-to-glycerolipid metabolic pathway, converting the sphingolipid metabolite hexadecenoic acid to hexadecenoyl-CoA, which is then further converted to glycerolipids. This Saccharomyces cerevisiae (strain ATCC 204508 / S288c) (Baker's yeast) protein is Long-chain-fatty-acid--CoA ligase 4 (FAA4).